The chain runs to 926 residues: Disease resistance protein RPM1 (926 aa).

A leucine-zipper region spans residues 10 to 45; the sequence is IGRILSVLENETLLLSGVHGEIDKMKKELLIMKSFL. The 315-residue stretch at 153 to 467 folds into the NB-ARC domain; the sequence is DAKWVNNISE…AQRFVEPIRG (315 aa). 200-207 contributes to the ATP binding site; it reads GMGGSGKT. 11 LRR repeats span residues 561–580, 581–603, 605–625, 626–649, 686–707, 708–731, 756–777, 778–804, 825–836, 837–859, and 876–900; these read LHSLLVCSSAKHKMELLPSL, NLLRALDLEDSSISKLPDCLVTM, NLKYLNLSKTQVKELPKNFHK, LVNLETLNTKHSKIEELPLGMWKL, LQVMDCFNAEDELIKNLGCMTQ, LTRISLVMVRREHGRDLCDSLNKI, TASIEKLFLAGKLERVPSWFNT, LQNLTYLGLRGSQLQENAILSIQTLPR, FQNLKILEIVQM, KHLTEVVIEDGAMFELQKLYVRA, and LQELHLIHVSNQLVERIRGEGSVDR.

The protein belongs to the disease resistance NB-LRR family. As to quaternary structure, interacts directly with RIN4 via its N-terminal region. Interacts (via N-terminus) with RIN2 and RIN3 (via C-terminus). Interacts with TIP49A, a protein known to interact with the TATA binding protein complex (TBP). Binds to MORC1/CRT1. Interacts, via its NB-ARC domain, with RIN13.

Its subcellular location is the endomembrane system. The protein localises to the cell membrane. Disease resistance (R) protein that specifically recognizes the AvrRpm1 type III effector avirulence protein from Pseudomonas syringae. Resistance proteins guard the plant against pathogens that contain an appropriate avirulence protein via an indirect interaction with this avirulence protein. That triggers a defense system including the hypersensitive response (HR), which restricts the pathogen growth. Acts via its interaction with RIN4, and probably triggers the plant resistance when RIN4 is phosphorylated by AvrRpm1. It is then degraded at the onset of the hypersensitive response. The chain is Disease resistance protein RPM1 from Arabidopsis thaliana (Mouse-ear cress).